The sequence spans 471 residues: Glutamate--tRNA ligase (471 aa).

A 'HIGH' region motif is present at residues 9–19; that stretch reads PSPTGYLHVGG. Residues C98, C100, C125, and H127 each contribute to the Zn(2+) site. The 'KMSKS' region motif lies at 237–241; it reads KLSKR. K240 lines the ATP pocket.

It belongs to the class-I aminoacyl-tRNA synthetase family. Glutamate--tRNA ligase type 1 subfamily. In terms of assembly, monomer. Requires Zn(2+) as cofactor.

It is found in the cytoplasm. It carries out the reaction tRNA(Glu) + L-glutamate + ATP = L-glutamyl-tRNA(Glu) + AMP + diphosphate. In terms of biological role, catalyzes the attachment of glutamate to tRNA(Glu) in a two-step reaction: glutamate is first activated by ATP to form Glu-AMP and then transferred to the acceptor end of tRNA(Glu). The sequence is that of Glutamate--tRNA ligase from Salmonella schwarzengrund (strain CVM19633).